The sequence spans 246 residues: UDP-N-acetyl-D-mannosaminuronic acid transferase (246 aa).

It belongs to the glycosyltransferase 26 family.

It carries out the reaction UDP-N-acetyl-alpha-D-mannosaminouronate + N-acetyl-alpha-D-glucosaminyl-di-trans,octa-cis-undecaprenyl diphosphate = beta-D-ManNAcA-(1-&gt;4)-alpha-D-GlcNAc-di-trans,octa-cis-undecaprenyl diphosphate + UDP + H(+). Its pathway is bacterial outer membrane biogenesis; enterobacterial common antigen biosynthesis. Its function is as follows. Catalyzes the synthesis of Und-PP-GlcNAc-ManNAcA (Lipid II), the second lipid-linked intermediate involved in enterobacterial common antigen (ECA) synthesis. The polypeptide is UDP-N-acetyl-D-mannosaminuronic acid transferase (Salmonella paratyphi A (strain ATCC 9150 / SARB42)).